Reading from the N-terminus, the 338-residue chain is Ornithine carbamoyltransferase, catabolic (338 aa).

Carbamoyl phosphate is bound by residues S58–T61, Q85, R109, and H136–Q139. L-ornithine-binding positions include N168, D232, and S236–M237. Carbamoyl phosphate is bound by residues C273–L274 and R318.

It belongs to the aspartate/ornithine carbamoyltransferase superfamily. OTCase family.

The protein resides in the cytoplasm. It catalyses the reaction carbamoyl phosphate + L-ornithine = L-citrulline + phosphate + H(+). It participates in amino-acid degradation; L-arginine degradation via ADI pathway; carbamoyl phosphate from L-arginine: step 2/2. Reversibly catalyzes the transfer of the carbamoyl group from carbamoyl phosphate (CP) to the N(epsilon) atom of ornithine (ORN) to produce L-citrulline. This chain is Ornithine carbamoyltransferase, catabolic, found in Streptococcus pneumoniae serotype 4 (strain ATCC BAA-334 / TIGR4).